A 112-amino-acid chain; its full sequence is UPF0102 protein Cla_1413 (112 aa).

This sequence belongs to the UPF0102 family.

In Campylobacter lari (strain RM2100 / D67 / ATCC BAA-1060), this protein is UPF0102 protein Cla_1413.